The primary structure comprises 116 residues: NADH-ubiquinone oxidoreductase chain 3 (116 aa).

The next 3 membrane-spanning stretches (helical) occupy residues 3 to 23 (LVIS…VVSF), 56 to 76 (FFLV…LLAL), and 85 to 105 (ATGT…GLIY).

This sequence belongs to the complex I subunit 3 family.

It is found in the mitochondrion membrane. It carries out the reaction a ubiquinone + NADH + 5 H(+)(in) = a ubiquinol + NAD(+) + 4 H(+)(out). In terms of biological role, core subunit of the mitochondrial membrane respiratory chain NADH dehydrogenase (Complex I) that is believed to belong to the minimal assembly required for catalysis. Complex I functions in the transfer of electrons from NADH to the respiratory chain. The immediate electron acceptor for the enzyme is believed to be ubiquinone. In Formosania lacustris (Oriental stream loach), this protein is NADH-ubiquinone oxidoreductase chain 3 (MT-ND3).